A 66-amino-acid polypeptide reads, in one-letter code: MKRKDTLKDYRGKSIDQLQEAKIELLQQLFSLRMQKGTGQLKKNHLFKSAKRDIARINTIISEKNK.

Belongs to the universal ribosomal protein uL29 family.

The sequence is that of Large ribosomal subunit protein uL29 from Francisella tularensis subsp. tularensis (strain FSC 198).